The sequence spans 158 residues: 2-amino-4-hydroxy-6-hydroxymethyldihydropteridine pyrophosphokinase (158 aa).

This sequence belongs to the HPPK family.

The catalysed reaction is 6-hydroxymethyl-7,8-dihydropterin + ATP = (7,8-dihydropterin-6-yl)methyl diphosphate + AMP + H(+). The protein operates within cofactor biosynthesis; tetrahydrofolate biosynthesis; 2-amino-4-hydroxy-6-hydroxymethyl-7,8-dihydropteridine diphosphate from 7,8-dihydroneopterin triphosphate: step 4/4. In terms of biological role, catalyzes the transfer of pyrophosphate from adenosine triphosphate (ATP) to 6-hydroxymethyl-7,8-dihydropterin, an enzymatic step in folate biosynthesis pathway. The chain is 2-amino-4-hydroxy-6-hydroxymethyldihydropteridine pyrophosphokinase (folK) from Methylorubrum extorquens (strain ATCC 14718 / DSM 1338 / JCM 2805 / NCIMB 9133 / AM1) (Methylobacterium extorquens).